The following is a 20-amino-acid chain: Phospholipase A2 D5 (20 aa).

Ca(2+) is required as a cofactor. In terms of processing, contains seven disulfide bonds. In terms of tissue distribution, expressed by the venom gland.

It localises to the secreted. The catalysed reaction is a 1,2-diacyl-sn-glycero-3-phosphocholine + H2O = a 1-acyl-sn-glycero-3-phosphocholine + a fatty acid + H(+). PLA2 catalyzes the calcium-dependent hydrolysis of the 2-acyl groups in 3-sn-phosphoglycerides. In Micrurus pyrrhocryptus (Coral snake), this protein is Phospholipase A2 D5.